Consider the following 454-residue polypeptide: uncharacterized protein (454 aa).

Belongs to the outer membrane factor (OMF) (TC 1.B.17) family.

This is an uncharacterized protein from Haemophilus influenzae (strain ATCC 51907 / DSM 11121 / KW20 / Rd).